The chain runs to 581 residues: MAAAAMAVSEAWPELELAERERRRELLLTGPGLEERVKAAGGRLPPRLFTLPLLHYLEVSGCGSLRAPGPGLAQGLPQLHSLVLRRNALGPGLSPELGPLPALRVLDLSGNALETLPPGEGLGPAEPPGLPQLQSLNLSGNRLRELPADLARCAPRLQSLNLTGNRLDAFPPELFRPGALPLLSELAAADNCLRELSPDIAHLASLKTLDLSNNQLTEIPAELADCPKLKEINFRGNRLRDKRLEKMVGGCQTKSILEYLRAGGRGGRSKGRQEASEKEDRKKRRERKQHRESGEGEEEVADSARLMLKVLHVSENPTPLTVRVSPEVKDVRPYIVGAIVRGMDLQPGNALRRFLNSQTKLHDDLCEKRTAATIATHDLQAVRGPLLYAARPPEDLKIVPLGRKEAKAKELVRQLQLEAEEQRKQKKRQSVSGLHRYLHLLDGKENYPCLVDAEGDVISFPPITNSEKTKIKKTTCNLFLEVTSATSLQLCKDIMDSLILRMAELSKSTSENKEEDMLSGTEADAGCGLSDPNLTLSSGKDGQCPLVVEQVRVVDLEGSLKVVYPSKTDLITLPPHVTVVR.

LRR repeat units lie at residues 78-97, 102-123, 132-154, 156-177, 182-204, 205-227, and 228-248; these read QLHS…SPEL, ALRV…EGLG, QLQS…ARCA, RLQS…LFRP, LLSE…AHLA, SLKT…ADCP, and KLKE…EKMV. Positions 262 to 301 are disordered; the sequence is AGGRGGRSKGRQEASEKEDRKKRRERKQHRESGEGEEEVA. The segment covering 271–280 has biased composition (basic and acidic residues); the sequence is GRQEASEKED. Residues serine 314, serine 430, and serine 519 each carry the phosphoserine modification. A coiled-coil region spans residues 401–436; the sequence is LGRKEAKAKELVRQLQLEAEEQRKQKKRQSVSGLHR.

This is Leucine-rich repeat-containing protein 47 (Lrrc47) from Mus musculus (Mouse).